The primary structure comprises 146 residues: Leptin (146 aa).

Cys96 and Cys146 are joined by a disulfide.

Belongs to the leptin family.

It is found in the secreted. In terms of biological role, key player in the regulation of energy balance and body weight control. Once released into the circulation, has central and peripheral effects by binding LEPR, found in many tissues, which results in the activation of several major signaling pathways. In the hypothalamus, acts as an appetite-regulating factor that induces a decrease in food intake and an increase in energy consumption by inducing anorexinogenic factors and suppressing orexigenic neuropeptides, also regulates bone mass and secretion of hypothalamo-pituitary-adrenal hormones. In the periphery, increases basal metabolism, influences reproductive function, regulates pancreatic beta-cell function and insulin secretion, is pro-angiogenic for endothelial cell and affects innate and adaptive immunity. In the arcuate nucleus of the hypothalamus, activates by depolarization POMC neurons inducing FOS and SOCS3 expression to release anorexigenic peptides and inhibits by hyperpolarization NPY neurons inducing SOCS3 with a consequent reduction on release of orexigenic peptides. In addition to its known satiety inducing effect, has a modulatory role in nutrient absorption. In the intestine, reduces glucose absorption by enterocytes by activating PKC and leading to a sequential activation of p38, PI3K and ERK signaling pathways which exerts an inhibitory effect on glucose absorption. Acts as a growth factor on certain tissues, through the activation of different signaling pathways increases expression of genes involved in cell cycle regulation such as CCND1, via JAK2-STAT3 pathway, or VEGFA, via MAPK1/3 and PI3K-AKT1 pathways. May also play an apoptotic role via JAK2-STAT3 pathway and up-regulation of BIRC5 expression. Pro-angiogenic, has mitogenic activity on vascular endothelial cells and plays a role in matrix remodeling by regulating the expression of matrix metalloproteinases (MMPs) and tissue inhibitors of metalloproteinases (TIMPs). In innate immunity, modulates the activity and function of neutrophils by increasing chemotaxis and the secretion of oxygen radicals. Increases phagocytosis by macrophages and enhances secretion of pro-inflammatory mediators. Increases cytotoxic ability of NK cells. Plays a pro-inflammatory role, in synergy with IL1B, by inducing NOS2 which promotes the production of IL6, IL8 and Prostaglandin E2, through a signaling pathway that involves JAK2, PI3K, MAP2K1/MEK1 and MAPK14/p38. In adaptive immunity, promotes the switch of memory T-cells towards T helper-1 cell immune responses. Increases CD4(+)CD25(-) T-cell proliferation and reduces autophagy during TCR (T-cell receptor) stimulation, through MTOR signaling pathway activation and BCL2 up-regulation. The protein is Leptin (LEP) of Ovis aries (Sheep).